Reading from the N-terminus, the 169-residue chain is MTPYAVAITVALLIVTVSALQVNNSCVAFPPSNLRGKNGDGTNEQYATALLSIPWNGPPESLRDINLIELEPQVALYLLENYINHYYNTTRDNKCPNNHYLMGGQLGSSSDNRSLNDPQTMLWPEKKEDEKNCQETFKGACSCTKRFCKGYFSVNIFGINLNISYSSGK.

In terms of biological role, involved in the unfolded protein response (UPR), a transcriptional response which up-regulates genes that enable cells to cope with misfolded, endoplasmic reticulum-retained proteins. UPR is part of the endoplasmic reticulum quality control (ERQC) which prevents the exit of misfolded secretory and membrane proteins from the endoplasmic reticulum. The chain is Unfolded protein response-inducible protein 1 (ULI1) from Saccharomyces cerevisiae (strain ATCC 204508 / S288c) (Baker's yeast).